We begin with the raw amino-acid sequence, 54 residues long: Defensin-like protein (54 aa).

At Gln-1 the chain carries Pyrrolidone carboxylic acid. 4 cysteine pairs are disulfide-bonded: Cys-4–Cys-52, Cys-16–Cys-37, Cys-22–Cys-47, and Cys-26–Cys-49.

This sequence belongs to the DEFL family. As to quaternary structure, monomer.

It localises to the secreted. Functionally, taste-modifying protein; sweet-tasting. It is 2000 sweeter than sucrose on a molar basis. Has a pH-specific antimicrobial activity against bacteria (B.subtilis, E.coli and S.aureus) and the fungus C.albicans. The polypeptide is Defensin-like protein (Pentadiplandra brazzeana).